A 303-amino-acid polypeptide reads, in one-letter code: Ribosomal protein L11 methyltransferase (303 aa).

Positions 144, 165, 187, and 235 each coordinate S-adenosyl-L-methionine.

It belongs to the methyltransferase superfamily. PrmA family.

The protein localises to the cytoplasm. It carries out the reaction L-lysyl-[protein] + 3 S-adenosyl-L-methionine = N(6),N(6),N(6)-trimethyl-L-lysyl-[protein] + 3 S-adenosyl-L-homocysteine + 3 H(+). Methylates ribosomal protein L11. In Prochlorococcus marinus (strain MIT 9312), this protein is Ribosomal protein L11 methyltransferase.